The following is a 62-amino-acid chain: MNAKLIYLLLVVTTMMLTFDTTQAGDIKCSGTRQCWGPCKKQTTCTNSKCMNGKCKCYGCVG.

A signal peptide spans 1 to 24 (MNAKLIYLLLVVTTMMLTFDTTQA). 4 cysteine pairs are disulfide-bonded: cysteine 29–cysteine 50, cysteine 35–cysteine 55, cysteine 39–cysteine 57, and cysteine 45–cysteine 60. Residue valine 61 is modified to Valine amide.

The protein belongs to the short scorpion toxin superfamily. Potassium channel inhibitor family. Alpha-KTx 06 subfamily. Post-translationally, C-terminal amidation is important for activity. There is a 50-70-fold decrease in ability to inhibit Kv1.2/KCNA2 when the toxin is not amidated. This decrease may be explained by a 23-fold slower association rate (k(on)) together with a 2-fold faster dissociation rate (k(off)). In terms of tissue distribution, expressed by the venom gland.

It localises to the secreted. In terms of biological role, reversible blocker of voltage-gated potassium channels with fast binding and unbinding kinetics. Has highest activity on human voltage-gated potassium channel Kv1.2/KCNA2 channels (IC(50)=0.11-0.16 nM), whereas its affinity for other channels tested was in the nanomolar range (hKv1.1/KCNA1, IC(50)=253 nM; hKv1.3/KCNA3, IC(50)=91 nM; and hKCa3.1/KCNN4, IC(50)=70 nM). The chain is Potassium channel toxin alpha-KTx 6.21 from Urodacus yaschenkoi (Inland robust scorpion).